Consider the following 88-residue polypeptide: Acylphosphatase (88 aa).

An Acylphosphatase-like domain is found at 3–88; it reads RLVALVKGRV…EAGLKGFHVY (86 aa). Active-site residues include Arg18 and Asn36.

Belongs to the acylphosphatase family.

It catalyses the reaction an acyl phosphate + H2O = a carboxylate + phosphate + H(+). The polypeptide is Acylphosphatase (acyP) (Thermus thermophilus (strain ATCC BAA-163 / DSM 7039 / HB27)).